The following is a 150-amino-acid chain: MQVILLEKVINLGSLGDIVRVKDGYARNFLIPTKRARRATQSAIAEFEVKRAELEKVAAEKLAAAQAEGEKLNGLTVQITQKSGVDGRLFGSVTNADIAEALAGQGFKLEKAQVRMPSGPLKVVGDHPVSVALHTDVVVDVTVAVLGEHV.

It belongs to the bacterial ribosomal protein bL9 family.

Binds to the 23S rRNA. The sequence is that of Large ribosomal subunit protein bL9 from Cupriavidus metallidurans (strain ATCC 43123 / DSM 2839 / NBRC 102507 / CH34) (Ralstonia metallidurans).